A 266-amino-acid polypeptide reads, in one-letter code: Chymotrypsin-like elastase family member 1 (266 aa).

Residues 1–16 form the signal peptide; that stretch reads MLRFLVLATLVLYGHS. Residues 17-26 constitute a propeptide, activation peptide; that stretch reads TRDFPETNAR. Positions 27-264 constitute a Peptidase S1 domain; it reads VVGGTEARKN…YISWINNVIA (238 aa). Cysteine 56 and cysteine 72 are oxidised to a cystine. The Charge relay system role is filled by histidine 71. Ca(2+) contacts are provided by glutamate 85, asparagine 87, glutamine 90, and glutamate 95. N-linked (GlcNAc...) asparagine glycosylation is present at asparagine 87. Catalysis depends on aspartate 119, which acts as the Charge relay system. 3 disulfides stabilise this stretch: cysteine 153/cysteine 220, cysteine 184/cysteine 200, and cysteine 210/cysteine 240. The active-site Charge relay system is serine 214. N-linked (GlcNAc...) asparagine glycosylation occurs at asparagine 241.

It belongs to the peptidase S1 family. Elastase subfamily. Ca(2+) is required as a cofactor.

It is found in the secreted. It catalyses the reaction Hydrolysis of proteins, including elastin. Preferential cleavage: Ala-|-Xaa.. Functionally, serine proteases that hydrolyze many proteins in addition to elastin. This is Chymotrypsin-like elastase family member 1 (CELA1) from Felis catus (Cat).